Here is a 117-residue protein sequence, read N- to C-terminus: Ig heavy chain V region 102 (117 aa).

Positions 1 to 19 (MGWSCIILFLVATATGVHS) are cleaved as a signal peptide. The framework-1 stretch occupies residues 20–49 (HVQLQQPGAELVKPGASVKVSCKASGYTFT). Residues Cys-41 and Cys-115 are joined by a disulfide bond. The complementarity-determining-1 stretch occupies residues 50-54 (SYWMH). A framework-2 region spans residues 55–68 (WVKQRPGQGLEWIG). The complementarity-determining-2 stretch occupies residues 69 to 85 (RIHPSDSDTNYNQKFKG). The framework-3 stretch occupies residues 86–117 (KATLTVDKSSSTAYMQLSSLTSEDSAVYYCAI).

The chain is Ig heavy chain V region 102 from Mus musculus (Mouse).